Consider the following 201-residue polypeptide: UPF0301 protein RHECIAT_CH0001061 (201 aa).

The protein belongs to the UPF0301 (AlgH) family.

The sequence is that of UPF0301 protein RHECIAT_CH0001061 from Rhizobium etli (strain CIAT 652).